The following is a 259-amino-acid chain: Cytochrome c oxidase subunit 3 (259 aa).

Transmembrane regions (helical) follow at residues 13 to 33 (PWPLTGSLGAMFLTVGLTSWF), 36 to 56 (HGFITMLLGLFLVLMTMFQWW), 80 to 100 (GMVLFITSEICFFFAFFWAYF), 125 to 145 (FQIPLLNTAILLASGVTVTWA), 154 to 174 (HAEATQSMVLTVILGGYFTLL), 195 to 215 (FFVATGFHGLHVIIGSVFLLI), and 237 to 257 (AWYWHFVDVVWLILYTCIYWW).

The protein belongs to the cytochrome c oxidase subunit 3 family. As to quaternary structure, component of the cytochrome c oxidase (complex IV, CIV), a multisubunit enzyme composed of a catalytic core of 3 subunits and several supernumerary subunits. The complex exists as a monomer or a dimer and forms supercomplexes (SCs) in the inner mitochondrial membrane with ubiquinol-cytochrome c oxidoreductase (cytochrome b-c1 complex, complex III, CIII).

The protein localises to the mitochondrion inner membrane. It catalyses the reaction 4 Fe(II)-[cytochrome c] + O2 + 8 H(+)(in) = 4 Fe(III)-[cytochrome c] + 2 H2O + 4 H(+)(out). In terms of biological role, component of the cytochrome c oxidase, the last enzyme in the mitochondrial electron transport chain which drives oxidative phosphorylation. The respiratory chain contains 3 multisubunit complexes succinate dehydrogenase (complex II, CII), ubiquinol-cytochrome c oxidoreductase (cytochrome b-c1 complex, complex III, CIII) and cytochrome c oxidase (complex IV, CIV), that cooperate to transfer electrons derived from NADH and succinate to molecular oxygen, creating an electrochemical gradient over the inner membrane that drives transmembrane transport and the ATP synthase. Cytochrome c oxidase is the component of the respiratory chain that catalyzes the reduction of oxygen to water. Electrons originating from reduced cytochrome c in the intermembrane space (IMS) are transferred via the dinuclear copper A center (CU(A)) of subunit 2 and heme A of subunit 1 to the active site in subunit 1, a binuclear center (BNC) formed by heme A3 and copper B (CU(B)). The BNC reduces molecular oxygen to 2 water molecules using 4 electrons from cytochrome c in the IMS and 4 protons from the mitochondrial matrix. This chain is Cytochrome c oxidase subunit 3 (COIII), found in Heterololigo bleekeri (Spear squid).